The primary structure comprises 601 residues: Sulfite reductase [NADPH] flavoprotein alpha-component (601 aa).

Residues Ile64–Val202 enclose the Flavodoxin-like domain. Residues Ser70–Ala75, Ser117–Gly120, and Leu153–Cys162 contribute to the FMN site. Residues Glu236 to Pro450 form the FAD-binding FR-type domain. FAD contacts are provided by residues Thr324, Ala358, Arg388 to Ser391, Thr406 to Gly408, and Gly421 to Ser424. NADP(+)-binding positions include Ser521–Arg522, Lys527–Gln531, and Asp563. Tyr601 is an FAD binding site.

It belongs to the NADPH-dependent sulphite reductase flavoprotein subunit CysJ family. In the N-terminal section; belongs to the flavodoxin family. The protein in the C-terminal section; belongs to the flavoprotein pyridine nucleotide cytochrome reductase family. In terms of assembly, alpha(8)-beta(8). The alpha component is a flavoprotein, the beta component is a hemoprotein. The cofactor is FAD. FMN serves as cofactor.

The catalysed reaction is hydrogen sulfide + 3 NADP(+) + 3 H2O = sulfite + 3 NADPH + 4 H(+). Its pathway is sulfur metabolism; hydrogen sulfide biosynthesis; hydrogen sulfide from sulfite (NADPH route): step 1/1. In terms of biological role, component of the sulfite reductase complex that catalyzes the 6-electron reduction of sulfite to sulfide. This is one of several activities required for the biosynthesis of L-cysteine from sulfate. The flavoprotein component catalyzes the electron flow from NADPH -&gt; FAD -&gt; FMN to the hemoprotein component. The protein is Sulfite reductase [NADPH] flavoprotein alpha-component of Enterobacter sp. (strain 638).